A 197-amino-acid chain; its full sequence is Probable molybdenum cofactor guanylyltransferase (197 aa).

GTP is bound by residues 10–12, K22, D73, and D102; that span reads LCG. Residue D102 participates in Mg(2+) binding.

The protein belongs to the MobA family. The cofactor is Mg(2+).

Its subcellular location is the cytoplasm. The catalysed reaction is Mo-molybdopterin + GTP + H(+) = Mo-molybdopterin guanine dinucleotide + diphosphate. In terms of biological role, transfers a GMP moiety from GTP to Mo-molybdopterin (Mo-MPT) cofactor (Moco or molybdenum cofactor) to form Mo-molybdopterin guanine dinucleotide (Mo-MGD) cofactor. The protein is Probable molybdenum cofactor guanylyltransferase of Methanothermobacter thermautotrophicus (strain ATCC 29096 / DSM 1053 / JCM 10044 / NBRC 100330 / Delta H) (Methanobacterium thermoautotrophicum).